We begin with the raw amino-acid sequence, 128 residues long: Small ribosomal subunit protein uS10 (128 aa).

Belongs to the universal ribosomal protein uS10 family.

This is Small ribosomal subunit protein uS10 (RPS20) from Oryza sativa subsp. japonica (Rice).